Consider the following 419-residue polypeptide: UDP-N-acetylglucosamine 1-carboxyvinyltransferase (419 aa).

22–23 contributes to the phosphoenolpyruvate binding site; the sequence is KN. Arginine 93 contacts UDP-N-acetyl-alpha-D-glucosamine. Catalysis depends on cysteine 117, which acts as the Proton donor. A 2-(S-cysteinyl)pyruvic acid O-phosphothioketal modification is found at cysteine 117. UDP-N-acetyl-alpha-D-glucosamine contacts are provided by aspartate 307 and isoleucine 329.

The protein belongs to the EPSP synthase family. MurA subfamily.

The protein localises to the cytoplasm. The enzyme catalyses phosphoenolpyruvate + UDP-N-acetyl-alpha-D-glucosamine = UDP-N-acetyl-3-O-(1-carboxyvinyl)-alpha-D-glucosamine + phosphate. It functions in the pathway cell wall biogenesis; peptidoglycan biosynthesis. Cell wall formation. Adds enolpyruvyl to UDP-N-acetylglucosamine. The chain is UDP-N-acetylglucosamine 1-carboxyvinyltransferase from Shewanella denitrificans (strain OS217 / ATCC BAA-1090 / DSM 15013).